The following is a 574-amino-acid chain: Isocitrate dehydrogenase kinase/phosphatase (574 aa).

Residues 315 to 321 (APGIRGM) and K336 each bind ATP. D371 is an active-site residue.

Belongs to the AceK family.

It is found in the cytoplasm. It carries out the reaction L-seryl-[isocitrate dehydrogenase] + ATP = O-phospho-L-seryl-[isocitrate dehydrogenase] + ADP + H(+). Its function is as follows. Bifunctional enzyme which can phosphorylate or dephosphorylate isocitrate dehydrogenase (IDH) on a specific serine residue. This is a regulatory mechanism which enables bacteria to bypass the Krebs cycle via the glyoxylate shunt in response to the source of carbon. When bacteria are grown on glucose, IDH is fully active and unphosphorylated, but when grown on acetate or ethanol, the activity of IDH declines drastically concomitant with its phosphorylation. The polypeptide is Isocitrate dehydrogenase kinase/phosphatase (Escherichia coli O81 (strain ED1a)).